Here is a 200-residue protein sequence, read N- to C-terminus: Peptidyl-tRNA hydrolase (200 aa).

F16 serves as a coordination point for tRNA. Catalysis depends on H21, which acts as the Proton acceptor. TRNA is bound by residues F67, N69, and N115.

The protein belongs to the PTH family. As to quaternary structure, monomer.

The protein resides in the cytoplasm. The enzyme catalyses an N-acyl-L-alpha-aminoacyl-tRNA + H2O = an N-acyl-L-amino acid + a tRNA + H(+). Its function is as follows. Hydrolyzes ribosome-free peptidyl-tRNAs (with 1 or more amino acids incorporated), which drop off the ribosome during protein synthesis, or as a result of ribosome stalling. Functionally, catalyzes the release of premature peptidyl moieties from peptidyl-tRNA molecules trapped in stalled 50S ribosomal subunits, and thus maintains levels of free tRNAs and 50S ribosomes. The sequence is that of Peptidyl-tRNA hydrolase from Prochlorococcus marinus (strain MIT 9215).